Consider the following 139-residue polypeptide: Peptide methionine sulfoxide reductase MsrB (139 aa).

In terms of domain architecture, MsrB spans 14 to 137 (DEEWRRELTP…NSISLDFQPE (124 aa)). Zn(2+)-binding residues include Cys53, Cys56, Cys102, and Cys105. The active-site Nucleophile is the Cys126.

It belongs to the MsrB Met sulfoxide reductase family. It depends on Zn(2+) as a cofactor.

It catalyses the reaction L-methionyl-[protein] + [thioredoxin]-disulfide + H2O = L-methionyl-(R)-S-oxide-[protein] + [thioredoxin]-dithiol. This is Peptide methionine sulfoxide reductase MsrB from Leifsonia xyli subsp. xyli (strain CTCB07).